A 169-amino-acid chain; its full sequence is Peptide methionine sulfoxide reductase MsrA (169 aa).

C10 is an active-site residue.

It belongs to the MsrA Met sulfoxide reductase family.

The enzyme catalyses L-methionyl-[protein] + [thioredoxin]-disulfide + H2O = L-methionyl-(S)-S-oxide-[protein] + [thioredoxin]-dithiol. The catalysed reaction is [thioredoxin]-disulfide + L-methionine + H2O = L-methionine (S)-S-oxide + [thioredoxin]-dithiol. Functionally, has an important function as a repair enzyme for proteins that have been inactivated by oxidation. Catalyzes the reversible oxidation-reduction of methionine sulfoxide in proteins to methionine. The sequence is that of Peptide methionine sulfoxide reductase MsrA from Streptococcus pyogenes serotype M28 (strain MGAS6180).